An 87-amino-acid polypeptide reads, in one-letter code: Small ribosomal subunit protein uS12m (87 aa).

The protein belongs to the universal ribosomal protein uS12 family.

It is found in the mitochondrion matrix. It localises to the kinetoplast. Functionally, protein S12 is involved in the translation initiation step. This chain is Small ribosomal subunit protein uS12m (RPS12), found in Trypanoplasma borreli.